The following is a 638-amino-acid chain: 1-deoxy-D-xylulose-5-phosphate synthase (638 aa).

Thiamine diphosphate is bound by residues His72 and 113–115 (GHA). Residue Asp144 participates in Mg(2+) binding. Thiamine diphosphate is bound by residues 145-146 (GA), Asn174, Tyr287, and Glu370. Position 174 (Asn174) interacts with Mg(2+).

This sequence belongs to the transketolase family. DXPS subfamily. As to quaternary structure, homodimer. Mg(2+) is required as a cofactor. Thiamine diphosphate serves as cofactor.

The enzyme catalyses D-glyceraldehyde 3-phosphate + pyruvate + H(+) = 1-deoxy-D-xylulose 5-phosphate + CO2. It functions in the pathway metabolic intermediate biosynthesis; 1-deoxy-D-xylulose 5-phosphate biosynthesis; 1-deoxy-D-xylulose 5-phosphate from D-glyceraldehyde 3-phosphate and pyruvate: step 1/1. Its function is as follows. Catalyzes the acyloin condensation reaction between C atoms 2 and 3 of pyruvate and glyceraldehyde 3-phosphate to yield 1-deoxy-D-xylulose-5-phosphate (DXP). This Picosynechococcus sp. (strain ATCC 27264 / PCC 7002 / PR-6) (Agmenellum quadruplicatum) protein is 1-deoxy-D-xylulose-5-phosphate synthase.